The primary structure comprises 108 residues: Class I hydrophobin hgfII (108 aa).

A signal peptide spans 1–19 (MFSRIAAVSFLALPLLAAA). Cystine bridges form between cysteine 28–cysteine 89, cysteine 35–cysteine 83, cysteine 36–cysteine 69, and cysteine 90–cysteine 103. Asparagine 92 carries N-linked (GlcNAc...) asparagine glycosylation.

Belongs to the fungal hydrophobin family. As to quaternary structure, self-assembles to form functional amyloid fibrils called rodlets with a diameter of 15-30 nm. Self-assembly into fibrillar rodlets occurs spontaneously at hydrophobic:hydrophilic interfaces and the rodlets further associate laterally to form amphipathic monolayers. As to expression, highky expressed in hyphae cultured in liquid medium.

It is found in the secreted. The protein localises to the cell wall. Functionally, aerial growth, conidiation, and dispersal of filamentous fungi in the environment rely upon a capability of their secreting small amphipathic proteins called hydrophobins (HPBs) with low sequence identity. Class I can self-assemble into an outermost layer of rodlet bundles on aerial cell surfaces, conferring cellular hydrophobicity that supports fungal growth, development and dispersal; whereas Class II form highly ordered films at water-air interfaces through intermolecular interactions but contribute nothing to the rodlet structure. HgfII is a class I hydrophobin that is involved in cell surface hydrophobicity and might play a key role during the growth and development of hyphae cultured in liquid medium. This is Class I hydrophobin hgfII from Grifola frondosa (Maitake).